We begin with the raw amino-acid sequence, 261 residues long: MSANKKTLVLKVGGALMQCEMGLARLMASAANIIKSGQSVILVHGGGCLVDEQLKANGMETVKLDGLRVTPEEQVPIVVGALAGTSNKILQASAIKAGITSVGMSLCDGAIVNGSIKDEQLGFVGEVSPNDPTYLNFLLAQGWMPIVSSIAVDDAGNLLNVNADQAATVIAKLVEGQLVLLSDVSGVLDGKGQLIKTLDKAHADELTKLGVIEKGMKVKVEAALEVAQWMGQPVQVASWRDAEQLSALEKGESIGTQVMPH.

Substrate contacts are provided by residues 46–47 (GG), Arg-68, and Asn-160.

Belongs to the acetylglutamate kinase family. ArgB subfamily.

It localises to the cytoplasm. It catalyses the reaction N-acetyl-L-glutamate + ATP = N-acetyl-L-glutamyl 5-phosphate + ADP. Its pathway is amino-acid biosynthesis; L-arginine biosynthesis; N(2)-acetyl-L-ornithine from L-glutamate: step 2/4. Catalyzes the ATP-dependent phosphorylation of N-acetyl-L-glutamate. The chain is Acetylglutamate kinase from Shewanella loihica (strain ATCC BAA-1088 / PV-4).